Consider the following 303-residue polypeptide: Quinolinate synthase (303 aa).

His-25 and Ser-42 together coordinate iminosuccinate. Cys-87 contacts [4Fe-4S] cluster. Iminosuccinate contacts are provided by residues 113 to 115 and Ser-130; that span reads YVN. Cys-174 contacts [4Fe-4S] cluster. Iminosuccinate contacts are provided by residues 200-202 and Thr-217; that span reads HPE. Position 260 (Cys-260) interacts with [4Fe-4S] cluster.

Belongs to the quinolinate synthase family. Type 2 subfamily. As to quaternary structure, homodimer. [4Fe-4S] cluster is required as a cofactor.

Its subcellular location is the cytoplasm. The catalysed reaction is iminosuccinate + dihydroxyacetone phosphate = quinolinate + phosphate + 2 H2O + H(+). The protein operates within cofactor biosynthesis; NAD(+) biosynthesis; quinolinate from iminoaspartate: step 1/1. Catalyzes the condensation of iminoaspartate with dihydroxyacetone phosphate to form quinolinate. This is Quinolinate synthase from Pyrococcus furiosus (strain ATCC 43587 / DSM 3638 / JCM 8422 / Vc1).